A 309-amino-acid polypeptide reads, in one-letter code: L-lactate dehydrogenase (309 aa).

Residues V12, D33, R38, Y63, and 77 to 78 (GA) contribute to the NAD(+) site. Substrate-binding positions include Q80, R86, and 118-121 (NPVD). NAD(+)-binding positions include 116–118 (ATN) and S141. 146 to 149 (DSAR) contacts substrate. The beta-D-fructose 1,6-bisphosphate site is built by R151 and H166. H173 (proton acceptor) is an active-site residue. Position 219 is a phosphotyrosine (Y219). T228 is a substrate binding site.

This sequence belongs to the LDH/MDH superfamily. LDH family. In terms of assembly, homotetramer.

Its subcellular location is the cytoplasm. The catalysed reaction is (S)-lactate + NAD(+) = pyruvate + NADH + H(+). Its pathway is fermentation; pyruvate fermentation to lactate; (S)-lactate from pyruvate: step 1/1. Its activity is regulated as follows. Allosterically activated by fructose 1,6-bisphosphate (FBP). Its function is as follows. Catalyzes the conversion of lactate to pyruvate. This is L-lactate dehydrogenase from Nitratidesulfovibrio vulgaris (strain ATCC 29579 / DSM 644 / CCUG 34227 / NCIMB 8303 / VKM B-1760 / Hildenborough) (Desulfovibrio vulgaris).